The primary structure comprises 533 residues: Metallothionein expression activator (533 aa).

C2H2-type zinc fingers lie at residues Tyr443–Pro472 and Tyr473–Pro500. The C2H2-type 3; atypical zinc finger occupies Tyr501–Cys524.

It localises to the nucleus. Its function is as follows. Regulates the transcription of genes required for cell separation. This is Metallothionein expression activator (ace2) from Schizosaccharomyces pombe (strain 972 / ATCC 24843) (Fission yeast).